A 115-amino-acid polypeptide reads, in one-letter code: Large ribosomal subunit protein bL20 (115 aa).

This sequence belongs to the bacterial ribosomal protein bL20 family.

Its function is as follows. Binds directly to 23S ribosomal RNA and is necessary for the in vitro assembly process of the 50S ribosomal subunit. It is not involved in the protein synthesizing functions of that subunit. The sequence is that of Large ribosomal subunit protein bL20 from Borrelia garinii subsp. bavariensis (strain ATCC BAA-2496 / DSM 23469 / PBi) (Borreliella bavariensis).